The sequence spans 101 residues: Small ribosomal subunit protein bS18c (101 aa).

It belongs to the bacterial ribosomal protein bS18 family. As to quaternary structure, part of the 30S ribosomal subunit.

It is found in the plastid. It localises to the chloroplast. This Citrus sinensis (Sweet orange) protein is Small ribosomal subunit protein bS18c.